The sequence spans 321 residues: Cytochrome c biogenesis protein CcsA (321 aa).

8 consecutive transmembrane segments (helical) span residues 9 to 29 (ILTHISFSIISVVITIQLMNL), 44 to 64 (GMIATFFSITGLLVTRWIYSG), 71 to 91 (LYESLIFLSWSFSIIHMVPYF), 98 to 118 (FSAITAPSAIFTQGFATSGLL), 143 to 163 (MLLSYAALLCGSLLSVALLVI), 225 to 245 (VISLGFIFLTIGILSGAVWAN), 252 to 272 (WNWDPKEIWAFITWAIFAIYL), and 286 to 306 (AIVASIGFLIIWICYFGVNLL).

The protein belongs to the CcmF/CycK/Ccl1/NrfE/CcsA family. May interact with Ccs1.

It is found in the plastid. It localises to the chloroplast thylakoid membrane. In terms of biological role, required during biogenesis of c-type cytochromes (cytochrome c6 and cytochrome f) at the step of heme attachment. This chain is Cytochrome c biogenesis protein CcsA, found in Acorus calamus var. americanus (American sweet flag).